A 564-amino-acid polypeptide reads, in one-letter code: Ovochymase-2 (564 aa).

Residues 1–22 (MLISRNKLILLLGIVFFERGKS) form the signal peptide. The propeptide at 23–51 (ATLSLPKAPSCGQSLVKVQPWNYFNIFSR) is activation peptide. In terms of domain architecture, Peptidase S1 spans 52–299 (ILGGSQVEKG…VLPWIHEHIQ (248 aa)). C77 and C93 are joined by a disulfide. Catalysis depends on H92, which acts as the Charge relay system. Residue N104 is glycosylated (N-linked (GlcNAc...) asparagine). E119 is a binding site for Ca(2+). Residue D142 is the Charge relay system of the active site. Cystine bridges form between C176–C246, C207–C225, C236–C265, C311–C341, and C365–C384. Catalysis depends on S240, which acts as the Charge relay system. CUB domains follow at residues 311–421 (CSEQ…YKAL) and 431–543 (CSYL…VSFI). N415 and N451 each carry an N-linked (GlcNAc...) asparagine glycan. Cystine bridges form between C431/C458 and C485/C506. Residue N530 is glycosylated (N-linked (GlcNAc...) asparagine).

This sequence belongs to the peptidase S1 family.

The protein resides in the secreted. In terms of biological role, may be required for sperm ADAM3 processing and consequential sperm fertilizing ability. In vitro, has an endopeptidase activity. This Homo sapiens (Human) protein is Ovochymase-2.